The primary structure comprises 125 residues: Large ribosomal subunit protein bL12 (125 aa).

The protein belongs to the bacterial ribosomal protein bL12 family. Homodimer. Part of the ribosomal stalk of the 50S ribosomal subunit. Forms a multimeric L10(L12)X complex, where L10 forms an elongated spine to which 2 to 4 L12 dimers bind in a sequential fashion. Binds GTP-bound translation factors.

Functionally, forms part of the ribosomal stalk which helps the ribosome interact with GTP-bound translation factors. Is thus essential for accurate translation. This chain is Large ribosomal subunit protein bL12, found in Syntrophomonas wolfei subsp. wolfei (strain DSM 2245B / Goettingen).